We begin with the raw amino-acid sequence, 116 residues long: MQIEVVKSKIHRVTVTGADLNYIGSITIDEVLLEASNIIEGEKVNIVNINNGERFETYAIKGAKNSGEITLNGPAARKVHKGDIIIIMSYARMDFEKAKTFKPWLVFPNEKDNSLK.

The active-site Schiff-base intermediate with substrate; via pyruvic acid is the Ser-25. A Pyruvic acid (Ser) modification is found at Ser-25. Thr-57 contributes to the substrate binding site. Tyr-58 functions as the Proton donor in the catalytic mechanism. A substrate-binding site is contributed by Gly-73 to Ala-75.

This sequence belongs to the PanD family. As to quaternary structure, heterooctamer of four alpha and four beta subunits. Pyruvate serves as cofactor. In terms of processing, is synthesized initially as an inactive proenzyme, which is activated by self-cleavage at a specific serine bond to produce a beta-subunit with a hydroxyl group at its C-terminus and an alpha-subunit with a pyruvoyl group at its N-terminus.

The protein resides in the cytoplasm. It carries out the reaction L-aspartate + H(+) = beta-alanine + CO2. The protein operates within cofactor biosynthesis; (R)-pantothenate biosynthesis; beta-alanine from L-aspartate: step 1/1. Catalyzes the pyruvoyl-dependent decarboxylation of aspartate to produce beta-alanine. This is Aspartate 1-decarboxylase from Flavobacterium psychrophilum (strain ATCC 49511 / DSM 21280 / CIP 103535 / JIP02/86).